The chain runs to 308 residues: Ribosomal RNA large subunit methyltransferase F (308 aa).

The protein belongs to the methyltransferase superfamily. METTL16/RlmF family.

The protein localises to the cytoplasm. The enzyme catalyses adenosine(1618) in 23S rRNA + S-adenosyl-L-methionine = N(6)-methyladenosine(1618) in 23S rRNA + S-adenosyl-L-homocysteine + H(+). Its function is as follows. Specifically methylates the adenine in position 1618 of 23S rRNA. This chain is Ribosomal RNA large subunit methyltransferase F, found in Escherichia coli (strain K12 / MC4100 / BW2952).